Consider the following 101-residue polypeptide: Urease subunit beta (101 aa).

This sequence belongs to the urease beta subunit family. Heterotrimer of UreA (gamma), UreB (beta) and UreC (alpha) subunits. Three heterotrimers associate to form the active enzyme.

It is found in the cytoplasm. It carries out the reaction urea + 2 H2O + H(+) = hydrogencarbonate + 2 NH4(+). It participates in nitrogen metabolism; urea degradation; CO(2) and NH(3) from urea (urease route): step 1/1. The sequence is that of Urease subunit beta from Acaryochloris marina (strain MBIC 11017).